Consider the following 538-residue polypeptide: CWF19-like protein 1 (538 aa).

Disordered regions lie at residues 259-278 and 298-324; these read PDVTENPYRKSGQEASTGKQ and QGRKRSSTGRDSKSSPHPKQPRKPPQP.

It belongs to the CWF19 family.

The chain is CWF19-like protein 1 (CWF19L1) from Pongo abelii (Sumatran orangutan).